Here is a 249-residue protein sequence, read N- to C-terminus: Phosphate import ATP-binding protein PstB 2 (249 aa).

One can recognise an ABC transporter domain in the interval 4 to 244; the sequence is IEVRDLDLFY…PKDKRTEDYI (241 aa). Residue 36 to 43 coordinates ATP; the sequence is GPSGCGKS.

Belongs to the ABC transporter superfamily. Phosphate importer (TC 3.A.1.7) family. In terms of assembly, the complex is composed of two ATP-binding proteins (PstB), two transmembrane proteins (PstC and PstA) and a solute-binding protein (PstS).

Its subcellular location is the cell membrane. The catalysed reaction is phosphate(out) + ATP + H2O = ADP + 2 phosphate(in) + H(+). Its function is as follows. Part of the ABC transporter complex PstSACB involved in phosphate import. Responsible for energy coupling to the transport system. The chain is Phosphate import ATP-binding protein PstB 2 from Caldanaerobacter subterraneus subsp. tengcongensis (strain DSM 15242 / JCM 11007 / NBRC 100824 / MB4) (Thermoanaerobacter tengcongensis).